The chain runs to 316 residues: Olfactory receptor 56B2 (316 aa).

Residues 1–32 (MVLQELRDSNSSKFQVSEFILMGFPGIHSWQH) are Extracellular-facing. An N-linked (GlcNAc...) asparagine glycan is attached at N10. The chain crosses the membrane as a helical span at residues 33 to 53 (WLSLPLALLYLLALSANILIL). Over 54-61 (IIINKEAA) the chain is Cytoplasmic. The helical transmembrane segment at 62–82 (LHQPMYYFLGILAMADIGLAT) threads the bilayer. The Extracellular segment spans residues 83-106 (TIMPKILAILWFNAKTISLLECFA). A disulfide bridge connects residues C104 and C196. Residues 107–127 (QMYAIHCFVAMESSTFVCMAI) form a helical membrane-spanning segment. Topologically, residues 128–146 (DRYVAICRPLRYPSIITES) are cytoplasmic. Residues 147 to 167 (FVFKANGFMALRNSLCLISVP) traverse the membrane as a helical segment. Topologically, residues 168–203 (LLAAQRHYCSQNQIEHCLCSNLGVTSLSCDDRRINS) are extracellular. A helical membrane pass occupies residues 204-224 (INQVLLAWTLMGSDLGLIILS). Residues 225 to 244 (YALILYSVLKLNSPEAASKA) lie on the Cytoplasmic side of the membrane. Residues 245–265 (LSTCTSHLILILFFYTVIIVI) traverse the membrane as a helical segment. Residues 266-279 (SITRSTGMRVPLIP) lie on the Extracellular side of the membrane. The helical transmembrane segment at 280 to 300 (VLLNVLHNVIPPALNPMVYAL) threads the bilayer. Topologically, residues 301–316 (KNKELRQGLYKVLRLE) are cytoplasmic.

It belongs to the G-protein coupled receptor 1 family.

Its subcellular location is the cell membrane. Odorant receptor. The chain is Olfactory receptor 56B2 from Homo sapiens (Human).